Reading from the N-terminus, the 87-residue chain is Small ribosomal subunit protein uS15 (87 aa).

The protein belongs to the universal ribosomal protein uS15 family. In terms of assembly, part of the 30S ribosomal subunit. Forms a bridge to the 50S subunit in the 70S ribosome, contacting the 23S rRNA.

In terms of biological role, one of the primary rRNA binding proteins, it binds directly to 16S rRNA where it helps nucleate assembly of the platform of the 30S subunit by binding and bridging several RNA helices of the 16S rRNA. Its function is as follows. Forms an intersubunit bridge (bridge B4) with the 23S rRNA of the 50S subunit in the ribosome. The chain is Small ribosomal subunit protein uS15 from Dehalococcoides mccartyi (strain ATCC BAA-2266 / KCTC 15142 / 195) (Dehalococcoides ethenogenes (strain 195)).